The following is a 340-amino-acid chain: N-acetyl-gamma-glutamyl-phosphate reductase (340 aa).

The active site involves Cys146.

Belongs to the NAGSA dehydrogenase family. Type 1 subfamily.

Its subcellular location is the cytoplasm. The enzyme catalyses N-acetyl-L-glutamate 5-semialdehyde + phosphate + NADP(+) = N-acetyl-L-glutamyl 5-phosphate + NADPH + H(+). It participates in amino-acid biosynthesis; L-arginine biosynthesis; N(2)-acetyl-L-ornithine from L-glutamate: step 3/4. Its function is as follows. Catalyzes the NADPH-dependent reduction of N-acetyl-5-glutamyl phosphate to yield N-acetyl-L-glutamate 5-semialdehyde. The polypeptide is N-acetyl-gamma-glutamyl-phosphate reductase (Streptococcus thermophilus (strain ATCC BAA-491 / LMD-9)).